A 193-amino-acid polypeptide reads, in one-letter code: MELGNQPGPGNRPEIELEWYQYVQNTVGWALASYGWYILFGCIILYFLIQKLSANFTRAGASTHTTVTDPDEIVRRQEAVTAARMRMQEELNAQAELYKQKQVQLQEEKRRRNIETWDRMQEGKSSKVACRLGQDASPSTSASSSPSTSSSAPKPKPERKPLRGSGYNPLTGDGGSTCAWRPGRRGPSSGGUG.

The helical transmembrane segment at 29–49 (WALASYGWYILFGCIILYFLI) threads the bilayer. Positions 114 to 125 (IETWDRMQEGKS) are enriched in basic and acidic residues. The segment at 114 to 193 (IETWDRMQEG…RRGPSSGGUG (80 aa)) is disordered. Residues 137 to 153 (SPSTSASSSPSTSSSAP) are compositionally biased toward low complexity. Position 192 (Sec-192) is a non-standard amino acid, selenocysteine.

This sequence belongs to the selenoprotein S family.

It localises to the endoplasmic reticulum membrane. The protein localises to the cytoplasm. Involved in the degradation process of misfolded endoplasmic reticulum (ER) luminal proteins. Participates in the transfer of misfolded proteins from the ER to the cytosol, where they are destroyed by the proteasome in a ubiquitin-dependent manner. This Xenopus laevis (African clawed frog) protein is Selenoprotein S A (vimp-a).